The chain runs to 548 residues: MENNKQDDHQEEFIFRSKLPDIYIPNHLPLHSYCFENISQFKDRPCLINGATGEIITYADVDLTSRKVAAGLDKLGIKQGDVIMLLLQNSPEFVYAFLAASYIGAIITTANPFYTPAEVAKQAAASKTKLVITLAGYIDKVKEFTGGESGVKVMCVDAPPPESECLHFSELTQADETEIPAVKIHPDDVVALPYSSGTTGLPKGVMLTHKGLVTSVAQQVDGDNPNLYFHQNDVILCVLPLFHIYSLNSILLCGLRVGAAILIMQKFEISKLLELIEKFKVTIAPFVPPIVLSVAKCPDLHRYDLSSIRTVMSGGAPMGKELEDAVKEKLPHAKLGQGYGMTEAGPVLSMCLAFAKEPFPIKSGACGTVVRNAEMKIVDPDTGASLPRNQSGEICIRGKQIMKGYINDAEATKGTIDEGGWLHTGDIGFIDNDDELFIVDRLKELIKYKGFQVAPAELESMLISHPNITDAAVVPMKDEAAGEVPVAFVVRSNGSKITEEDIKQYISKQVVFYKRINKAFFIEEIPKNPSGKILRKILRAKLVTEQAI.

Residues 195–203 (SSGTTGLPK), 337–342 (QGYGMT), Asp426, 438–441 (IVDR), and Lys532 contribute to the ATP site. Residues 268-337 (EISKLLELIE…EKLPHAKLGQ (70 aa)) are SBD1. The segment at 338–405 (GYGMTEAGPV…IRGKQIMKGY (68 aa)) is SBD2.

It belongs to the ATP-dependent AMP-binding enzyme family. As to expression, mostly expressed in glandular trichomes (lupulin glands) after flowering, and, to a lower extent, in stems, leaves, cones and flowers.

Its subcellular location is the cytoplasm. It catalyses the reaction (E)-4-coumarate + ATP + CoA = (E)-4-coumaroyl-CoA + AMP + diphosphate. The protein operates within secondary metabolite biosynthesis. Involved in the biosynthesis of prenylated phenolics natural products which contribute to the bitter taste of beer and display broad biological activities. Catalyzes the ligation of CoA on (E)-4-coumarate to produce (E)-4-coumaroyl-CoA. This Humulus lupulus (European hop) protein is 4-coumarate--CoA ligase CCL1.